We begin with the raw amino-acid sequence, 119 residues long: 5-hydroxyisourate hydrolase (119 aa).

Positions 10, 48, and 116 each coordinate substrate.

The protein belongs to the transthyretin family. 5-hydroxyisourate hydrolase subfamily. Homotetramer.

The catalysed reaction is 5-hydroxyisourate + H2O = 5-hydroxy-2-oxo-4-ureido-2,5-dihydro-1H-imidazole-5-carboxylate + H(+). Its pathway is purine metabolism; urate degradation; (S)-allantoin from urate: step 2/3. In terms of biological role, catalyzes the hydrolysis of 5-hydroxyisourate (HIU) to 2-oxo-4-hydroxy-4-carboxy-5-ureidoimidazoline (OHCU). The protein is 5-hydroxyisourate hydrolase of Deinococcus radiodurans (strain ATCC 13939 / DSM 20539 / JCM 16871 / CCUG 27074 / LMG 4051 / NBRC 15346 / NCIMB 9279 / VKM B-1422 / R1).